Here is a 266-residue protein sequence, read N- to C-terminus: Ribosomal RNA small subunit methyltransferase A (266 aa).

Residues asparagine 11, leucine 13, glycine 37, glutamate 57, aspartate 85, and asparagine 104 each contribute to the S-adenosyl-L-methionine site.

The protein belongs to the class I-like SAM-binding methyltransferase superfamily. rRNA adenine N(6)-methyltransferase family. RsmA subfamily.

The protein localises to the cytoplasm. It catalyses the reaction adenosine(1518)/adenosine(1519) in 16S rRNA + 4 S-adenosyl-L-methionine = N(6)-dimethyladenosine(1518)/N(6)-dimethyladenosine(1519) in 16S rRNA + 4 S-adenosyl-L-homocysteine + 4 H(+). Its function is as follows. Specifically dimethylates two adjacent adenosines (A1518 and A1519) in the loop of a conserved hairpin near the 3'-end of 16S rRNA in the 30S particle. May play a critical role in biogenesis of 30S subunits. This is Ribosomal RNA small subunit methyltransferase A from Campylobacter jejuni subsp. jejuni serotype O:2 (strain ATCC 700819 / NCTC 11168).